The following is a 640-amino-acid chain: MDNCDVLIIGTGLQESILAAALSWQGTQVLHIDSNTYYGDSCSTLTIEQLKKWCGDVNSGKIHQFQDAQIYIPGGKQSNQYTSKDYGIDLTPKIMFCQSDLLSLLIKSRVYRYLEFQSLSNFHVFENDDFQQKVNATTKQDIFTDKSLSLMTKRYLMKFLKFLLLDPDYKQRVKPYADTPIQVFLQQEFKLEEPQINELVYSIGLSYKEQTSTKQALIRMKRFLSSFDVYGKFPCMVSKFGGPGELSQGFCRSAAVAGTTYKLNTNLTDFDPISKIAHFNDGSHIKINEKIIISPTQLPKFLQSSYNKVVENLQPYYVTRLVTVVRRDCKEWMSGNESSAIVVFPPHSLPTDNQHSVQVIIQNGNSGVCPDGQAIWFSSTVEQDLSRAKVDLESAFEKMETSLLRESSEEIVNDILGDNNNNNNNNNNNNNNNNNNNNNDFVMNAQGTTTPVLVNSFKLGSSLINFVPKDKLEIVCKLGYVEKTFINPDLSNIFKPTKTNNIVYKDVEDANNEIIFTNMPSSELSYDGIITDVKSIYQRITGTTDDFFDVDFEDEEDEYDRNNQPVVQPKRSSVVGGIVGGGSITSLTALREQHNENNHSDNAIDSDEDEDEDINDMNDNEEEDDHGRGPEPFGADEMEL.

Disordered regions lie at residues 414 to 439 and 594 to 640; these read DILGDNNNNNNNNNNNNNNNNNNNNN and HNEN…EMEL. Residues 419–439 are compositionally biased toward low complexity; sequence NNNNNNNNNNNNNNNNNNNNN. Positions 604-624 are enriched in acidic residues; the sequence is IDSDEDEDEDINDMNDNEEED.

This sequence belongs to the Rab GDI family.

Functionally, substrate-binding subunit (component A) of the Rab geranylgeranyltransferase (GGTase) complex. Binds unprenylated Rab proteins and presents the substrate peptide to the catalytic component B. The component A is thought to be regenerated by transferring its prenylated Rab back to the donor membrane. The chain is Rab proteins geranylgeranyltransferase component A (MRS6) from Candida albicans (Yeast).